The primary structure comprises 301 residues: Protoheme IX farnesyltransferase (301 aa).

9 helical membrane-spanning segments follow: residues 16 to 36 (VVAL…PGMP), 41 to 61 (IQSG…AAAI), 93 to 113 (VFAG…VNLI), 114 to 134 (TAVL…VYLK), 141 to 161 (IVIG…AVTG), 172 to 192 (SLLV…LAIF), 217 to 237 (QILL…ATGM), 238 to 258 (SGVF…WYAW), and 273 to 293 (FGYS…DHWL).

This sequence belongs to the UbiA prenyltransferase family. Protoheme IX farnesyltransferase subfamily.

The protein resides in the cell inner membrane. It catalyses the reaction heme b + (2E,6E)-farnesyl diphosphate + H2O = Fe(II)-heme o + diphosphate. The protein operates within porphyrin-containing compound metabolism; heme O biosynthesis; heme O from protoheme: step 1/1. In terms of biological role, converts heme B (protoheme IX) to heme O by substitution of the vinyl group on carbon 2 of heme B porphyrin ring with a hydroxyethyl farnesyl side group. This is Protoheme IX farnesyltransferase from Xylella fastidiosa (strain Temecula1 / ATCC 700964).